An 89-amino-acid polypeptide reads, in one-letter code: Small ribosomal subunit protein uS15 (89 aa).

Belongs to the universal ribosomal protein uS15 family. Part of the 30S ribosomal subunit. Forms a bridge to the 50S subunit in the 70S ribosome, contacting the 23S rRNA.

Functionally, one of the primary rRNA binding proteins, it binds directly to 16S rRNA where it helps nucleate assembly of the platform of the 30S subunit by binding and bridging several RNA helices of the 16S rRNA. Forms an intersubunit bridge (bridge B4) with the 23S rRNA of the 50S subunit in the ribosome. The chain is Small ribosomal subunit protein uS15 from Nitrosomonas eutropha (strain DSM 101675 / C91 / Nm57).